The following is a 155-amino-acid chain: Large ribosomal subunit protein uL30 (155 aa).

Belongs to the universal ribosomal protein uL30 family. In terms of assembly, part of the 50S ribosomal subunit.

The sequence is that of Large ribosomal subunit protein uL30 from Nitrosopumilus maritimus (strain SCM1).